The following is a 636-amino-acid chain: Carbon monoxide dehydrogenase 1 (636 aa).

Residues C38, C46, C47, C50, C55, and C69 each contribute to the [4Fe-4S] cluster site. H262, C297, C335, C448, C478, and C528 together coordinate [Ni-4Fe-5S] cluster.

The protein belongs to the Ni-containing carbon monoxide dehydrogenase family. Homodimer. [4Fe-4S] cluster serves as cofactor. Requires [Ni-4Fe-5S] cluster as cofactor.

It is found in the cytoplasm. The protein localises to the cell membrane. It carries out the reaction CO + 2 oxidized [2Fe-2S]-[ferredoxin] + H2O = 2 reduced [2Fe-2S]-[ferredoxin] + CO2 + 2 H(+). With respect to regulation, inactivated by O(2). Functionally, CODH oxidizes carbon monoxide coupled, via CooF, to the reduction of a hydrogen cation by a hydrogenase (possibly CooH). The protein is Carbon monoxide dehydrogenase 1 (cooS1) of Carboxydothermus hydrogenoformans (strain ATCC BAA-161 / DSM 6008 / Z-2901).